The primary structure comprises 138 residues: Large ribosomal subunit protein eL14A (138 aa).

At Ser2 the chain carries N-acetylserine.

Belongs to the eukaryotic ribosomal protein eL14 family. In terms of assembly, component of the large ribosomal subunit (LSU). Mature yeast ribosomes consist of a small (40S) and a large (60S) subunit. The 40S small subunit contains 1 molecule of ribosomal RNA (18S rRNA) and 33 different proteins (encoded by 57 genes). The large 60S subunit contains 3 rRNA molecules (25S, 5.8S and 5S rRNA) and 46 different proteins (encoded by 81 genes). N-terminally acetylated by acetyltransferase NatA.

It localises to the cytoplasm. In terms of biological role, component of the ribosome, a large ribonucleoprotein complex responsible for the synthesis of proteins in the cell. The small ribosomal subunit (SSU) binds messenger RNAs (mRNAs) and translates the encoded message by selecting cognate aminoacyl-transfer RNA (tRNA) molecules. The large subunit (LSU) contains the ribosomal catalytic site termed the peptidyl transferase center (PTC), which catalyzes the formation of peptide bonds, thereby polymerizing the amino acids delivered by tRNAs into a polypeptide chain. The nascent polypeptides leave the ribosome through a tunnel in the LSU and interact with protein factors that function in enzymatic processing, targeting, and the membrane insertion of nascent chains at the exit of the ribosomal tunnel. The protein is Large ribosomal subunit protein eL14A of Saccharomyces cerevisiae (strain ATCC 204508 / S288c) (Baker's yeast).